The chain runs to 559 residues: Glucose-6-phosphate isomerase (559 aa).

The active-site Proton donor is E352. Residues H383 and K511 contribute to the active site.

It belongs to the GPI family.

It is found in the cytoplasm. It carries out the reaction alpha-D-glucose 6-phosphate = beta-D-fructose 6-phosphate. The protein operates within carbohydrate biosynthesis; gluconeogenesis. It functions in the pathway carbohydrate degradation; glycolysis; D-glyceraldehyde 3-phosphate and glycerone phosphate from D-glucose: step 2/4. Functionally, catalyzes the reversible isomerization of glucose-6-phosphate to fructose-6-phosphate. The protein is Glucose-6-phosphate isomerase of Chlorobium phaeobacteroides (strain DSM 266 / SMG 266 / 2430).